Here is a 1257-residue protein sequence, read N- to C-terminus: Liprin-alpha-2 (1257 aa).

Disordered stretches follow at residues 1 to 29 (MMCEVMPTINEDTPMSQRGSQSSGSDSDS), 231 to 265 (ASSEGSTESEHLEGMEPGQKVHEKRLSNGSIDSTD), and 438 to 463 (EGQLEEKNQELQRARQREKMNEEHNK). The segment covering 16–26 (SQRGSQSSGSD) has biased composition (low complexity). Coiled coils occupy residues 29 to 154 (SHFE…SLRM), 185 to 541 (KALD…SLIE), and 643 to 695 (HSDA…GLNL). Serine 236 carries the post-translational modification Phosphoserine. At threonine 237 the chain carries Phosphothreonine. A compositionally biased stretch (basic and acidic residues) spans 238–256 (ESEHLEGMEPGQKVHEKRL). Serine 239 bears the Phosphoserine mark. Phosphoserine occurs at positions 687 and 689. Low complexity-rich tracts occupy residues 709–725 (TASSLASSSPPSGHSTP) and 798–813 (SSLSVSLEPESLGLGS). 2 disordered regions span residues 709-738 (TASSLASSSPPSGHSTPKLTPRSPAREMDR) and 790-834 (SSYH…KSSI). A phosphoserine mark is found at serine 817 and serine 820. 3 consecutive SAM domains span residues 898–964 (WDGP…MVSL), 1020–1084 (NHEW…LKRL), and 1108–1177 (WSND…LLAL). The stretch at 1081–1107 (LKRLNYDRKELERRREASQHEIKDVLV) forms a coiled coil.

It belongs to the liprin family. Liprin-alpha subfamily. Forms homodimers and heterodimers with liprins-alpha and liprins-beta. Interacts with the second PTPase domain of PTPRD, PTPRF and PTPRS. Interacts with KIF1A; the interaction decreases in presence of calcium. Expressed only in brain.

It is found in the cytoplasm. The protein resides in the cell surface. Its subcellular location is the cell projection. The protein localises to the dendritic spine. Functionally, alters PTPRF cellular localization and induces PTPRF clustering. May regulate the disassembly of focal adhesions. May localize receptor-like tyrosine phosphatases type 2A at specific sites on the plasma membrane, possibly regulating their interaction with the extracellular environment and their association with substrates. In neuronal cells, is a scaffolding protein in the dendritic spines which acts as immobile postsynaptic post able to recruit KIF1A-driven dense core vesicles to dendritic spines. The polypeptide is Liprin-alpha-2 (PPFIA2) (Homo sapiens (Human)).